Reading from the N-terminus, the 99-residue chain is Plastocyanin (99 aa).

The region spanning 1-99 (IEILLGGDDG…AGMVGKVTVN (99 aa)) is the Plastocyanin-like domain. Cu cation contacts are provided by His-37, Cys-84, His-87, and Met-92.

The protein belongs to the plastocyanin family. Requires Cu(2+) as cofactor.

The protein resides in the plastid. It is found in the chloroplast thylakoid membrane. Its function is as follows. Participates in electron transfer between P700 and the cytochrome b6-f complex in photosystem I. The protein is Plastocyanin (PETE) of Cucumis sativus (Cucumber).